We begin with the raw amino-acid sequence, 59 residues long: U17-myrmicitoxin-Tb1f (59 aa).

The signal sequence occupies residues 1–27 (MEKNRTTTFSVYLTIILFLISTFITMV). Residues 28–31 (ITES) constitute a propeptide that is removed on maturation. The residue at position 58 (H58) is a Histidine amide.

In terms of tissue distribution, expressed by the venom gland.

The protein localises to the secreted. The sequence is that of U17-myrmicitoxin-Tb1f from Tetramorium bicarinatum (Tramp ant).